A 580-amino-acid chain; its full sequence is MAKMRVRFPTLVLLLGIVFLMAVSIGIAYGEKNVLKNHERPQEREQEERDPRQQPRPHHQEEQEREHRRESEESQEEEREQRREPRREREQEQQPQHGRREEEEEWQPRRQRPQSRREEREQEQGSSSSSRRQSGYERREQREEREQEQEQGSRSDSRRQRNPYYFSSERFQTLYRNRNGQIRVLERFDQRTNRLENLQNYRIVEFQSKPNTLILPKHSDADYILVVLNGSATITIVNPDKRQSYNLENGDALRLPAGTTSYILNPDDNQNLRVVKLAIPINNPGNFYDFYPSSSKDQQSYFSGFSKNTLEATFNTRYEEIQSILLGNEDEQEDDEQWHGQEQSHQDEGVIVRVSKEQVQELRKYAQSSSRKGKPYESGPFNLRSNKPIYSNKFGNFYEITPDRNPQAQDLDISLTFIEINEGALLLPHYNSKAIFVVVVDEGEGNYELVGIRDQQRQQDEQEVRRYSARLSEGDIFVIPAGHPISINASSNLRLLGFGINADENQRNFLAGSEDNVIRQLDREVKGLIFPGSAEDVERLIKNQQQSYFANAQPQQQQQREREGRHGRRGHISSILSTLY.

The signal sequence occupies residues 1–30 (MAKMRVRFPTLVLLLGIVFLMAVSIGIAYG). Basic and acidic residues-rich tracts occupy residues 37–72 (NHER…RESE) and 79–92 (REQR…REQE). The disordered stretch occupies residues 37-165 (NHERPQEREQ…DSRRQRNPYY (129 aa)). The segment covering 124–133 (QGSSSSSRRQ) has biased composition (low complexity). Positions 134–145 (SGYERREQREER) are enriched in basic and acidic residues. Cupin type-1 domains are found at residues 164 to 322 (YYFS…EEIQ) and 381 to 538 (FNLR…EDVE). N-linked (GlcNAc...) asparagine glycosylation is found at Asn229 and Asn488. Residues 549 to 569 (FANAQPQQQQQREREGRHGRR) are disordered.

This sequence belongs to the 7S seed storage protein family. In terms of assembly, component of globulins complexes which accumulate in seeds.

Functionally, seed storage protein. Accumulates during seed development and is hydrolyzed after germination to provide a carbon and nitrogen source for the developing seedling. This chain is Conglutin beta 3, found in Lupinus angustifolius (Narrow-leaved blue lupine).